The primary structure comprises 287 residues: Protease HtpX (287 aa).

2 helical membrane-spanning segments follow: residues 4–24 and 36–56; these read ILLF…VLNI and LSGL…ISLL. Residue His143 coordinates Zn(2+). Glu144 is an active-site residue. His147 is a binding site for Zn(2+). The next 2 membrane-spanning stretches (helical) occupy residues 158–178 and 192–212; these read LMQG…ANIV and MVYF…ASFI. Position 221 (Glu221) interacts with Zn(2+).

The protein belongs to the peptidase M48B family. Zn(2+) serves as cofactor.

The protein localises to the cell inner membrane. The protein is Protease HtpX of Vibrio cholerae serotype O1 (strain ATCC 39315 / El Tor Inaba N16961).